Reading from the N-terminus, the 147-residue chain is Biogenesis of lysosome-related organelles complex 1 subunit 1 (147 aa).

Disordered stretches follow at residues 1–25 and 125–147; these read MLTS…VRRK and SSGA…PSAT.

The protein belongs to the BLOC1S1 family. Component of the biogenesis of lysosome-related organelles complex-1 (BLOC-1) composed of Blos1, Blos2, Blos3, Blos4, Dysb, Muted, Pldn and Snapin. Interacts with Pldn.

Functionally, component of the biogenesis of lysosome-related organelles complex-1 (BLOC-1) involved in pigment granule biogenesis and membrane trafficking in synapses. In response to high synaptic activity at neuromuscular junctions, stabilizes Pldn protein levels and, together with Pldn, plays a role in promoting efficient synaptic vesicle recycling and re-formation through early endosomes. This chain is Biogenesis of lysosome-related organelles complex 1 subunit 1, found in Drosophila melanogaster (Fruit fly).